A 127-amino-acid polypeptide reads, in one-letter code: Fluoride-specific ion channel FluC (127 aa).

The next 4 helical transmembrane spans lie at 7–27 (LFLI…LTLL), 37–57 (FGTL…LAMF), 70–90 (FFVT…AEVI), and 102–122 (ITIT…GVFI). The Na(+) site is built by glycine 77 and threonine 80.

Belongs to the fluoride channel Fluc/FEX (TC 1.A.43) family.

Its subcellular location is the cell inner membrane. It carries out the reaction fluoride(in) = fluoride(out). Its activity is regulated as follows. Na(+) is not transported, but it plays an essential structural role and its presence is essential for fluoride channel function. In terms of biological role, fluoride-specific ion channel. Important for reducing fluoride concentration in the cell, thus reducing its toxicity. In Histophilus somni (strain 129Pt) (Haemophilus somnus), this protein is Fluoride-specific ion channel FluC.